Consider the following 588-residue polypeptide: DNA mismatch repair protein MutL (588 aa).

This sequence belongs to the DNA mismatch repair MutL/HexB family.

This protein is involved in the repair of mismatches in DNA. It is required for dam-dependent methyl-directed DNA mismatch repair. May act as a 'molecular matchmaker', a protein that promotes the formation of a stable complex between two or more DNA-binding proteins in an ATP-dependent manner without itself being part of a final effector complex. This Methanocorpusculum labreanum (strain ATCC 43576 / DSM 4855 / Z) protein is DNA mismatch repair protein MutL.